Consider the following 471-residue polypeptide: Thymidine phosphorylase (471 aa).

Positions 1–10 (MAAPGTPPPS) are enriched in pro residues. The tract at residues 1–21 (MAAPGTPPPSASGGGGGEPRQ) is disordered. Residue Thr6 is modified to Phosphothreonine. His102, Arg188, Ser203, and Lys207 together coordinate substrate.

Belongs to the thymidine/pyrimidine-nucleoside phosphorylase family. In terms of assembly, homodimer.

The catalysed reaction is thymidine + phosphate = 2-deoxy-alpha-D-ribose 1-phosphate + thymine. It functions in the pathway pyrimidine metabolism; dTMP biosynthesis via salvage pathway; dTMP from thymine: step 1/2. Catalyzes the reversible phosphorolysis of thymidine. The produced molecules are then utilized as carbon and energy sources or in the rescue of pyrimidine bases for nucleotide synthesis. The polypeptide is Thymidine phosphorylase (Tymp) (Mus musculus (Mouse)).